We begin with the raw amino-acid sequence, 135 residues long: MPTINQLVRKGRHSKTTKSKSPALNYSYNSMKKEQVFNPAPQMRGVATRVGTMTPKKPNSALRKYARVRLSNLTEVTAYIPGEGHNLQEHSVVLIRGGRVKDLPGVRYHIVRGALDTAGVDGRKQARSKYGAKKG.

The tract at residues 1–24 (MPTINQLVRKGRHSKTTKSKSPAL) is disordered. A compositionally biased stretch (basic residues) spans 9 to 18 (RKGRHSKTTK). Position 102 is a 3-methylthioaspartic acid (aspartate 102).

It belongs to the universal ribosomal protein uS12 family. Part of the 30S ribosomal subunit. Contacts proteins S8 and S17. May interact with IF1 in the 30S initiation complex.

With S4 and S5 plays an important role in translational accuracy. In terms of biological role, interacts with and stabilizes bases of the 16S rRNA that are involved in tRNA selection in the A site and with the mRNA backbone. Located at the interface of the 30S and 50S subunits, it traverses the body of the 30S subunit contacting proteins on the other side and probably holding the rRNA structure together. The combined cluster of proteins S8, S12 and S17 appears to hold together the shoulder and platform of the 30S subunit. This is Small ribosomal subunit protein uS12 from Lactobacillus delbrueckii subsp. bulgaricus (strain ATCC 11842 / DSM 20081 / BCRC 10696 / JCM 1002 / NBRC 13953 / NCIMB 11778 / NCTC 12712 / WDCM 00102 / Lb 14).